The primary structure comprises 586 residues: Arginine--tRNA ligase (586 aa).

The 'HIGH' region motif lies at 127-137 (PNVAKEMHVGH).

Belongs to the class-I aminoacyl-tRNA synthetase family. As to quaternary structure, monomer.

The protein localises to the cytoplasm. It carries out the reaction tRNA(Arg) + L-arginine + ATP = L-arginyl-tRNA(Arg) + AMP + diphosphate. This chain is Arginine--tRNA ligase (argS), found in Streptomyces coelicolor (strain ATCC BAA-471 / A3(2) / M145).